Reading from the N-terminus, the 831-residue chain is DNA ligase (831 aa).

NAD(+)-binding positions include 34–38 (DADYD), 83–84 (SL), and glutamate 114. Catalysis depends on lysine 116, which acts as the N6-AMP-lysine intermediate. NAD(+)-binding residues include arginine 137, glutamate 174, lysine 291, and lysine 315. Residues cysteine 409, cysteine 412, cysteine 427, and cysteine 433 each contribute to the Zn(2+) site. A BRCT domain is found at 749 to 831 (AHTAPLNGQS…LAFLGQYSAQ (83 aa)).

It belongs to the NAD-dependent DNA ligase family. LigA subfamily. The cofactor is Mg(2+). Mn(2+) serves as cofactor.

The enzyme catalyses NAD(+) + (deoxyribonucleotide)n-3'-hydroxyl + 5'-phospho-(deoxyribonucleotide)m = (deoxyribonucleotide)n+m + AMP + beta-nicotinamide D-nucleotide.. In terms of biological role, DNA ligase that catalyzes the formation of phosphodiester linkages between 5'-phosphoryl and 3'-hydroxyl groups in double-stranded DNA using NAD as a coenzyme and as the energy source for the reaction. It is essential for DNA replication and repair of damaged DNA. The chain is DNA ligase from Xylella fastidiosa (strain 9a5c).